A 544-amino-acid chain; its full sequence is Lysophosphatidylcholine acyltransferase 2 (544 aa).

Residues Met-1 to Met-58 are Cytoplasmic-facing. A helical; Signal-anchor for type II membrane protein membrane pass occupies residues Phe-59–Leu-79. The Lumenal segment spans residues Ala-80–Asp-544. An HXXXXD motif motif is present at residues His-146–Asp-151. The EGTC motif motif lies at Glu-220 to Cys-223. 2 consecutive EF-hand domains span residues Pro-391–Pro-426 and Asn-428–Val-463. Ca(2+)-binding residues include Asp-404, Asn-406, Asp-408, Ser-410, Glu-415, Asp-441, Asp-443, Asp-445, Tyr-447, and Glu-452. Over residues Thr-520–Glu-532 the composition is skewed to polar residues. Residues Thr-520–Asp-544 are disordered.

This sequence belongs to the 1-acyl-sn-glycerol-3-phosphate acyltransferase family. In terms of tissue distribution, highest expression is found in resident macrophages and casein-induced neutrophils followed by skin, colon, spleen and thioglycollate-induced macrophages. Detected in erythroleukemic cells but not in reticulocytes.

It localises to the endoplasmic reticulum membrane. The protein localises to the golgi apparatus membrane. It is found in the cell membrane. Its subcellular location is the lipid droplet. The catalysed reaction is a 1-acyl-sn-glycero-3-phosphocholine + an acyl-CoA = a 1,2-diacyl-sn-glycero-3-phosphocholine + CoA. The enzyme catalyses a 1-O-alkyl-sn-glycero-3-phosphocholine + acetyl-CoA = a 1-O-alkyl-2-acetyl-sn-glycero-3-phosphocholine + CoA. It carries out the reaction a 1-acyl-sn-glycero-3-phosphate + an acyl-CoA = a 1,2-diacyl-sn-glycero-3-phosphate + CoA. It catalyses the reaction a 1-O-(1Z-alkenyl)-sn-glycero-3-phosphocholine + an acyl-CoA = a 1-O-(1Z-alkenyl)-2-acyl-sn-glycero-3-phosphocholine + CoA. The catalysed reaction is 1-O-octadecyl-sn-glycero-3-phosphocholine + acetyl-CoA = 1-O-octadecyl-2-acetyl-sn-glycero-3-phosphocholine + CoA. The enzyme catalyses 1-hexadecanoyl-sn-glycero-3-phosphocholine + acetyl-CoA = 1-hexadecanoyl-2-acetyl-sn-glycero-3-phosphocholine + CoA. It carries out the reaction 1-octadecanoyl-sn-glycero-3-phosphocholine + acetyl-CoA = 1-octadecanoyl-2-acetyl-sn-glycero-3-phosphocholine + CoA. It catalyses the reaction a 1-O-(1Z-alkenyl)-sn-glycero-3-phosphocholine + acetyl-CoA = 1-O-(1Z)-alkenyl-2-acetyl-sn-glycero-3-phosphocholine + CoA. The catalysed reaction is 1-O-hexadecyl-sn-glycero-3-phosphocholine + acetyl-CoA = 1-O-hexadecyl-2-acetyl-sn-glycero-3-phosphocholine + CoA. The enzyme catalyses 1-O-octadecyl-sn-glycero-3-phosphocholine + (5Z,8Z,11Z,14Z)-eicosatetraenoyl-CoA = 1-O-octadecyl-2-(5Z,8Z,11Z,14Z)-eicosatetraenoyl-sn-glycero-3-phosphocholine + CoA. It carries out the reaction 1-hexadecanoyl-sn-glycero-3-phosphate + (9Z)-octadecenoyl-CoA = 1-hexadecanoyl-2-(9Z-octadecenoyl)-sn-glycero-3-phosphate + CoA. It catalyses the reaction 1-(9Z-octadecenoyl)-sn-glycero-3-phosphate + (9Z)-octadecenoyl-CoA = 1,2-di-(9Z-octadecenoyl)-sn-glycero-3-phosphate + CoA. The catalysed reaction is 1-(9Z-octadecenoyl)-sn-glycero-3-phosphate + hexadecanoyl-CoA = 1-(9Z)-octadecenoyl-2-hexadecanoyl-sn-glycero-3-phosphate + CoA. The enzyme catalyses 1-heptadecanoyl-sn-glycero-3-phosphate + (9Z)-octadecenoyl-CoA = 1-heptadecanoyl-2-(9Z)-octadecenoyl-sn-glycero-3-phosphate + CoA. It carries out the reaction 1-octadecanoyl-sn-glycero-3-phosphate + (9Z)-octadecenoyl-CoA = 1-octadecanoyl-2-(9Z-octadecenoyl)-sn-glycero-3-phosphate + CoA. It catalyses the reaction heptadecanoyl-CoA + 1-(9Z-octadecenoyl)-sn-glycero-3-phosphate = 1-(9Z)-octadecenoyl-2-heptadecanoyl-sn-glycero-3-phosphate + CoA. The catalysed reaction is 1-(9Z-octadecenoyl)-sn-glycero-3-phosphate + (9Z,12Z)-octadecadienoyl-CoA = 1-(9Z)-octadecenoyl-2-(9Z,12Z)-octadecadienoyl-sn-glycero-3-phosphate + CoA. The enzyme catalyses 1-(9Z-octadecenoyl)-sn-glycero-3-phosphate + tetradecanoyl-CoA = 1-(9Z)-octadecenoyl-2-tetradecanoyl-sn-glycero-3-phosphate + CoA. It carries out the reaction pentadecanoyl-CoA + 1-(9Z-octadecenoyl)-sn-glycero-3-phosphate = 1-(9Z)-octadecenoyl-2-pentadecanoyl-sn-glycero-3-phosphate + CoA. It catalyses the reaction nonadecanoyl-CoA + 1-(9Z-octadecenoyl)-sn-glycero-3-phosphate = 1-(9Z)-octadecenoyl-2-nonadecanoyl-sn-glycero-3-phosphate + CoA. The catalysed reaction is 1-hexadecanoyl-sn-glycero-3-phosphocholine + (9Z)-octadecenoyl-CoA = 1-hexadecanoyl-2-(9Z-octadecenoyl)-sn-glycero-3-phosphocholine + CoA. Its pathway is lipid metabolism; phospholipid metabolism. Acetyltransferase activity is increased following acute inflammatory stimulation by lipopolysaccharide (LPS). Acyltransferase activity is unchanged. In terms of biological role, exhibits both acyltransferase and acetyltransferase activities. Activity is calcium-dependent. Catalyzes the conversion of lysophosphatidylcholine (1-acyl-sn-glycero-3-phosphocholine or LPC) into phosphatidylcholine (1,2-diacyl-sn-glycero-3-phosphocholine or PC). Catalyzes the conversion 1-acyl-sn-glycerol-3-phosphate (lysophosphatidic acid or LPA) into 1,2-diacyl-sn-glycerol-3-phosphate (phosphatidic acid or PA) by incorporating an acyl moiety at the sn-2 position of the glycerol backbone. Involved in platelet-activating factor (PAF) biosynthesis by catalyzing the conversion of the PAF precursor, 1-O-alkyl-sn-glycero-3-phosphocholine (lyso-PAF) into 1-O-alkyl-2-acetyl-sn-glycero-3-phosphocholine (PAF). Also converts lyso-PAF to 1-O-alkyl-2-acyl-sn-glycero-3-phosphocholine (PC), a major component of cell membranes and a PAF precursor. Under resting conditions, acyltransferase activity is preferred. Upon acute inflammatory stimulus, acetyltransferase activity is enhanced and PAF synthesis increases. Involved in the regulation of lipid droplet number and size. This is Lysophosphatidylcholine acyltransferase 2 (Lpcat2) from Mus musculus (Mouse).